A 180-amino-acid chain; its full sequence is MSRIGRLPIPVPKGVQVQVSPGLVKVKGPKGELSVPVSPELKVVVEENVVRVERPSDERRHRSLHGLTRTLIANAVKGVSEGYVKELLIKGIGYRARLVGRSIELTVGFSHPVVVEPPEGITFEVPEPTRIRVLGIDKQKVGQVAADIRAIKKPSAYHEKGIYYADEPVRLKPGKAGAKK.

The protein belongs to the universal ribosomal protein uL6 family. In terms of assembly, part of the 50S ribosomal subunit.

In terms of biological role, this protein binds to the 23S rRNA, and is important in its secondary structure. It is located near the subunit interface in the base of the L7/L12 stalk, and near the tRNA binding site of the peptidyltransferase center. This Thermus aquaticus protein is Large ribosomal subunit protein uL6.